The following is a 586-amino-acid chain: Madf and zinc finger protein 1 (586 aa).

An involved in interaction with Cp190 region spans residues 161–194; that stretch reads FMSEDDLAPPRKPGRPPRRTRPGQVFKFKVSFIR. The segment at residues 201–292 is a DNA-binding region (MADF 1); sequence HLIQAYKEHP…KCEFLSVAPV (92 aa). The segment at 294–319 is involved in interaction with Cp190; that stretch reads TPRENEEDNDLTAIKLNFKEENLITT. Positions 320-413 form a DNA-binding region, MADF 2; that stretch reads SFIETYANYP…MCSFLPAKGS (94 aa). 6 consecutive C2H2-type zinc fingers follow at residues 418-441, 448-471, 476-498, 504-527, 533-555, and 561-583; these read LYCDYCDKRFHGDYNLRVHIVKAH, YLCSFCPRRFDRHVDMDRHKLRSH, LKCQYCEKSFAVDTDLKVHTLIH, HVCDICGKTFRLKLLLDHHVNGVH, YSCNMCTKTFRKKFELANHIKGH, and KKCEYCDATFYDHSSLSRHRRSH.

Interacts (via regions flanking MADF domain 1) with Cp190 (via regions between the BTB domain and first zinc finger domain); the interaction is probably direct and is essential for protein function.

Its subcellular location is the nucleus. It localises to the chromosome. The protein localises to the nucleoplasm. Functionally, chromatin-binding protein involved in the organization of active promoters and insulators. Essential for the activity of heterochromatin promoters; primarily binds to specific motifs within promoters of housekeeping genes. May also associate to a lesser extent with promoters in euchromatin. Mediates recruitment of Cp190, a multifunctional protein involved in the recruitment of transcription complexes, the creation of open chromatin regions and the activity of insulators. Cooperates with pita and su(Hw) to recruit Cp190 and regulate insulator function at the front-ultraabdominal (Fub) boundary. May cooperate with other C2H2 zinc finger proteins, such as M1BP, to recruit CP190 to promoters. May be involved in cellular organization and development of the eye. The protein is Madf and zinc finger protein 1 of Drosophila melanogaster (Fruit fly).